The sequence spans 378 residues: Diacetylchitobiose uptake system ATP-binding protein MsiK (378 aa).

One can recognise an ABC transporter domain in the interval 4–236; the sequence is VTFDKATRVY…PANLFVAGFI (233 aa). Position 38–45 (38–45) interacts with ATP; sequence GPSGCGKS.

This sequence belongs to the ABC transporter superfamily. As to quaternary structure, the DasABC-MsiK complex is composed of two ATP-binding proteins (MsiK), two transmembrane proteins (DasB and DasC) and a solute-binding protein (DasA). The NgcEFG-MsiK complex is composed of two ATP-binding proteins (MsiK), two transmembrane proteins (NgcF and NgcG) and a solute-binding protein (NgcE).

The protein localises to the cell membrane. Its function is as follows. Part of the ABC transporter complexes DasABC-MsiK and NgcEFG-MsiK involved in N,N'-diacetylchitobiose ((GlcNAc)2) uptake. Responsible for energy coupling to the transport system. The chain is Diacetylchitobiose uptake system ATP-binding protein MsiK from Streptomyces coelicolor (strain ATCC BAA-471 / A3(2) / M145).